The chain runs to 157 residues: DNA gyrase inhibitor (157 aa).

Belongs to the DNA gyrase inhibitor family. Interacts with DNA gyrase.

It is found in the cytoplasm. Inhibits the supercoiling activity of DNA gyrase. Acts by inhibiting DNA gyrase at an early step, prior to (or at the step of) binding of DNA by the gyrase. It protects cells against toxins that target DNA gyrase, by inhibiting activity of these toxins and reducing the formation of lethal double-strand breaks in the cell. This chain is DNA gyrase inhibitor, found in Shigella boydii serotype 18 (strain CDC 3083-94 / BS512).